A 490-amino-acid polypeptide reads, in one-letter code: Aspartyl/glutamyl-tRNA(Asn/Gln) amidotransferase subunit B (490 aa).

The protein belongs to the GatB/GatE family. GatB subfamily. In terms of assembly, heterotrimer of A, B and C subunits.

It catalyses the reaction L-glutamyl-tRNA(Gln) + L-glutamine + ATP + H2O = L-glutaminyl-tRNA(Gln) + L-glutamate + ADP + phosphate + H(+). The catalysed reaction is L-aspartyl-tRNA(Asn) + L-glutamine + ATP + H2O = L-asparaginyl-tRNA(Asn) + L-glutamate + ADP + phosphate + 2 H(+). Its function is as follows. Allows the formation of correctly charged Asn-tRNA(Asn) or Gln-tRNA(Gln) through the transamidation of misacylated Asp-tRNA(Asn) or Glu-tRNA(Gln) in organisms which lack either or both of asparaginyl-tRNA or glutaminyl-tRNA synthetases. The reaction takes place in the presence of glutamine and ATP through an activated phospho-Asp-tRNA(Asn) or phospho-Glu-tRNA(Gln). This chain is Aspartyl/glutamyl-tRNA(Asn/Gln) amidotransferase subunit B, found in Methylobacterium sp. (strain 4-46).